Reading from the N-terminus, the 626-residue chain is Lysine--tRNA ligase, cytoplasmic (626 aa).

Met1 carries the post-translational modification N-acetylmethionine. Polar residues-rich tracts occupy residues Met1–Ala11 and Asp18–Glu27. The interval Met1–Glu84 is disordered. Positions Arg37–Ala69 form a coiled coil. The span at Leu42–Lys67 shows a compositional bias: basic and acidic residues. Over residues Ala69–Val78 the composition is skewed to low complexity. A DNA-binding region (OB) is located at residues Ser141–Ser217. 2 residues coordinate substrate: Gly313 and Glu337. Residues Arg359–Glu361 and His367–Asn368 each bind ATP. Substrate contacts are provided by Glu375 and Tyr377. Ca(2+)-binding residues include Glu521 and Glu528. Glu528–Leu529 lines the ATP pocket. 2 residues coordinate substrate: Asn531 and Glu535. Residue Gly584–Arg587 participates in ATP binding.

Belongs to the class-II aminoacyl-tRNA synthetase family. It depends on Ca(2+) as a cofactor.

Its subcellular location is the cytoplasm. The protein localises to the cytosol. The enzyme catalyses tRNA(Lys) + L-lysine + ATP = L-lysyl-tRNA(Lys) + AMP + diphosphate. Functionally, catalyzes the specific attachment of an amino acid to its cognate tRNA in a 2 step reaction: the amino acid (AA) is first activated by ATP to form AA-AMP and then transferred to the acceptor end of the tRNA. Promotes aminoacylation of non-cognate tRNAs and translational recoding of lysine at nonsense codons. In Arabidopsis thaliana (Mouse-ear cress), this protein is Lysine--tRNA ligase, cytoplasmic.